Reading from the N-terminus, the 435-residue chain is Amidase 1 (435 aa).

Residues Lys-38 and Ser-115 each act as charge relay system in the active site. Ser-139 acts as the Acyl-ester intermediate in catalysis.

Belongs to the amidase family.

The protein localises to the cytoplasm. It is found in the nucleus. Its subcellular location is the nucleoplasm. The catalysed reaction is a monocarboxylic acid amide + H2O = a monocarboxylate + NH4(+). Its function is as follows. Amidase involved in auxin biosynthesis. Converts indole-3-acetamide (IAM) to indole-3-acetate, and phenyl-2-acetamide (PAM) to phenyl-2-acetate. Substrate preference is PAM &gt; IAM. This is Amidase 1 from Oryza sativa subsp. japonica (Rice).